Here is a 250-residue protein sequence, read N- to C-terminus: ATP synthase subunit a (250 aa).

The next 6 membrane-spanning stretches (helical) occupy residues 29–49 (ASLF…FATS), 84–104 (FFPL…LGMF), 114–134 (IIVT…YGFY), 143–163 (VFVP…IEII), 193–213 (FVAS…LPLI), and 216–236 (VALT…FAVL).

It belongs to the ATPase A chain family. In terms of assembly, F-type ATPases have 2 components, CF(1) - the catalytic core - and CF(0) - the membrane proton channel. CF(1) has five subunits: alpha(3), beta(3), gamma(1), delta(1), epsilon(1). CF(0) has three main subunits: a(1), b(2) and c(9-12). The alpha and beta chains form an alternating ring which encloses part of the gamma chain. CF(1) is attached to CF(0) by a central stalk formed by the gamma and epsilon chains, while a peripheral stalk is formed by the delta and b chains.

The protein localises to the cell inner membrane. Its function is as follows. Key component of the proton channel; it plays a direct role in the translocation of protons across the membrane. This Rhizobium etli (strain CIAT 652) protein is ATP synthase subunit a.